Consider the following 359-residue polypeptide: MYPKMKNDLILRAAKGEEVERPPVWIMRQAGRYLPEYHKLRAKQSFFEMCQTPETACELTLQPVTRFKGLLDAAIIFSDILVIPQALGMQVVMLEQKGPHFPKPLVVPEDIDLLEKTPNISAKLGYVMDAISLTREKLDGQVPLMGFSGAPWTIMAYMIEGGGSKTFAKAKSWLFRYPEASHKLLKIITDATVSYLIQQVYAGAQLLQIFDSWAGELSPEDFTEYAYPYLVRICQEVKQHLKKKKRDEVPMIVFAKGAWYAIDQLCDSGYDVIGLDWTVSPKEAVRIRGNRRVTFQGNLDPNILYGTREIIEARTKEMIQDFGGGKQGYIINLGHGITPGVNPDDVRFFLEKCHQYGSA.

Arginine 28, alanine 30, arginine 32, aspartate 79, tyrosine 157, serine 212, and histidine 335 together coordinate coproporphyrinogen III.

It belongs to the uroporphyrinogen decarboxylase family. In terms of assembly, monomer.

Its subcellular location is the nucleus. The protein resides in the cytoplasm. It catalyses the reaction uroporphyrinogen III + 4 H(+) = coproporphyrinogen III + 4 CO2. The enzyme catalyses uroporphyrinogen I + 4 H(+) = coproporphyrinogen I + 4 CO2. The protein operates within porphyrin-containing compound metabolism; protoporphyrin-IX biosynthesis; coproporphyrinogen-III from 5-aminolevulinate: step 4/4. Functionally, catalyzes the sequential decarboxylation of four acetate groups of uroporphyrinogen-III (octacarboxyporphyrin) to yield coproporphyrinogen-III (tetracarboxyporphyrin) with the formation of intermediate hepta-, hexa- and penta-carboxylate porphyrinogens in the heme biosynthesis pathway. Acts on a number of porphyrinogens, but only coproporphyrinogen III can ultimately be converted to heme. The chain is Uroporphyrinogen decarboxylase (hem12) from Schizosaccharomyces pombe (strain 972 / ATCC 24843) (Fission yeast).